Reading from the N-terminus, the 370-residue chain is Protein Brevis radix-like 3 (370 aa).

The region spanning 140–221 is the BRX 1 domain; sequence KEWVAQVEPG…NFEKVMELYN (82 aa). Polar residues-rich tracts occupy residues 231 to 248 and 266 to 291; these read LQTP…QSVK and PGSS…SSID. The tract at residues 231–316 is disordered; it reads LQTPPVSEDG…VSNASDMESE (86 aa). One can recognise a BRX 2 domain in the interval 315–370; sequence SEWVEQDEPGIYITIRALPDGNRELRRVRFSRDKFGETHARLWWEQNRARIQQQYL.

Belongs to the BRX family. In terms of tissue distribution, expressed in roots.

The protein resides in the nucleus. The polypeptide is Protein Brevis radix-like 3 (BRXL3) (Arabidopsis thaliana (Mouse-ear cress)).